Consider the following 452-residue polypeptide: Na(+)/H(+) antiporter NhaA (452 aa).

The next 11 helical transmembrane spans lie at 23-43, 71-91, 108-128, 136-156, 165-185, 189-209, 216-236, 316-336, 349-369, 385-405, and 418-438; these read MMLF…LSTI, LLQF…GLEI, LPIV…LLVV, GAAI…AVLG, VFLT…IALF, HINI…YLMG, LGLY…SGIH, IVGY…TLGG, VFLG…YGFV, LMAV…IATL, and EAKL…IVTL.

It belongs to the NhaA Na(+)/H(+) (TC 2.A.33) antiporter family.

It is found in the cell inner membrane. It carries out the reaction Na(+)(in) + 2 H(+)(out) = Na(+)(out) + 2 H(+)(in). Its function is as follows. Na(+)/H(+) antiporter that extrudes sodium in exchange for external protons. This Porphyromonas gingivalis (strain ATCC BAA-308 / W83) protein is Na(+)/H(+) antiporter NhaA.